Here is a 322-residue protein sequence, read N- to C-terminus: uncharacterized protein (322 aa).

The next 5 helical transmembrane spans lie at 159 to 179, 203 to 223, 234 to 254, 267 to 287, and 296 to 316; these read GIIF…MLYL, MNIP…YIWL, GGIL…RVGL, FEGS…LIPY, and TLLS…FFAW.

The protein localises to the membrane. This is an uncharacterized protein from Dictyostelium discoideum (Social amoeba).